We begin with the raw amino-acid sequence, 228 residues long: Cytochrome b5 domain-containing protein 1 (228 aa).

In terms of domain architecture, Cytochrome b5 heme-binding spans 17–83 (RRYFTPAEVA…DPKTRDIRKH (67 aa)). Heme is bound by residues Tyr-52 and His-83.

It belongs to the cytochrome b5 family.

It localises to the cytoplasm. Its subcellular location is the cytoskeleton. The protein localises to the cilium axoneme. Functionally, radial spoke stalk protein that binds heme under oxidizing conditions. Required for the coordinated beating of multiple cilia maybe by functioning in a redox signaling pathway. This Homo sapiens (Human) protein is Cytochrome b5 domain-containing protein 1.